Consider the following 302-residue polypeptide: AT-hook motif nuclear-localized protein 29 (302 aa).

Residues 1–95 form a disordered region; that stretch reads MDGGYDQSGG…KPPVIVTRDS (95 aa). Positions 32–44 are enriched in pro residues; sequence QLHPLPQPQPQPQ. The segment at residues 72 to 84 is a DNA-binding region (a.T hook); the sequence is KRPRGRPPGSKNK. A PPC domain is found at 96 to 241; it reads PNVLRSHVLE…DEGGEGGEGG (146 aa). The segment at 164–169 is required for the binding to non-AHL interactors; it reads GRFEIL. The tract at residues 229–279 is disordered; sequence PLEDEGGEGGEGGEVGEGGGGEGGPPPATSSSPPSGAGQGQLRGNMSGYDQ. Gly residues predominate over residues 237-251; sequence GGEGGEVGEGGGGEG.

Homodimer. Interacts with AHL5, AHL12, AHL25, AHL27, TCP4, TCP13 and EF114. Expressed in the hypocotyl and the vascular tissue of seedling.

The protein localises to the nucleus. Its function is as follows. Transcription factor that specifically binds AT-rich DNA sequences related to the nuclear matrix attachment regions (MARs). Acts redundantly with AHL18, AHL22 and AHL27 in the regulation of flowering and regulation of the hypocotyl elongation. Acts redundantly with AHL27/ESC to modulate hypocotyl growth inhibition in response to light. This is AT-hook motif nuclear-localized protein 29 from Arabidopsis thaliana (Mouse-ear cress).